A 456-amino-acid chain; its full sequence is Cysteine synthase 2 (456 aa).

A helical membrane pass occupies residues 9–29 (VYGTVALTAAFAAGILVTLGF).

Belongs to the cysteine synthase/cystathionine beta-synthase family. The cofactor is pyridoxal 5'-phosphate.

Its subcellular location is the mitochondrion outer membrane. It carries out the reaction O-acetyl-L-serine + hydrogen sulfide = L-cysteine + acetate. Its function is as follows. Putative cysteine synthase that catalyzes the conversion of O-acetyl-L-serine (OAS) into cysteine, the last step in the cysteine biosynthesis pathway. However, in contrast to cysteine synthase cys-17, this CS-like protein may not function in cysteine biosynthesis. This Neurospora crassa (strain ATCC 24698 / 74-OR23-1A / CBS 708.71 / DSM 1257 / FGSC 987) protein is Cysteine synthase 2.